We begin with the raw amino-acid sequence, 441 residues long: Probable pyridine nucleotide-disulfide oxidoreductase RclA (441 aa).

An FAD-binding site is contributed by 33–43 (EQSNAMYGGTC). Cysteine 43 and cysteine 48 are oxidised to a cystine. The active-site Proton acceptor is the histidine 426.

Belongs to the class-I pyridine nucleotide-disulfide oxidoreductase family. It depends on FAD as a cofactor.

In terms of biological role, probably involved in reactive chlorine species (RCS) stress resistance. The polypeptide is Probable pyridine nucleotide-disulfide oxidoreductase RclA (rclA) (Escherichia coli (strain K12)).